The sequence spans 151 residues: 16.9 kDa class I heat shock protein 1 (151 aa).

The region spanning 37–151 (ETAAFANARV…PEVKAIEISG (115 aa)) is the sHSP domain.

The protein belongs to the small heat shock protein (HSP20) family. As to quaternary structure, may form oligomeric structures.

Its subcellular location is the cytoplasm. The sequence is that of 16.9 kDa class I heat shock protein 1 (hsp16.9A) from Triticum aestivum (Wheat).